The chain runs to 629 residues: tRNA uridine 5-carboxymethylaminomethyl modification enzyme MnmG (629 aa).

13–18 serves as a coordination point for FAD; the sequence is GGGHAG. 273 to 287 is a binding site for NAD(+); it reads GPRYCPSIEDKIHRF.

It belongs to the MnmG family. In terms of assembly, homodimer. Heterotetramer of two MnmE and two MnmG subunits. It depends on FAD as a cofactor.

It localises to the cytoplasm. NAD-binding protein involved in the addition of a carboxymethylaminomethyl (cmnm) group at the wobble position (U34) of certain tRNAs, forming tRNA-cmnm(5)s(2)U34. This chain is tRNA uridine 5-carboxymethylaminomethyl modification enzyme MnmG, found in Shewanella baltica (strain OS185).